We begin with the raw amino-acid sequence, 324 residues long: Biotin synthase (324 aa).

One can recognise a Radical SAM core domain in the interval Asn-42 to Arg-269. [4Fe-4S] cluster is bound by residues Cys-57, Cys-61, and Cys-64. The [2Fe-2S] cluster site is built by Cys-101, Cys-132, Cys-192, and Arg-264.

This sequence belongs to the radical SAM superfamily. Biotin synthase family. Homodimer. [4Fe-4S] cluster serves as cofactor. [2Fe-2S] cluster is required as a cofactor.

The enzyme catalyses (4R,5S)-dethiobiotin + (sulfur carrier)-SH + 2 reduced [2Fe-2S]-[ferredoxin] + 2 S-adenosyl-L-methionine = (sulfur carrier)-H + biotin + 2 5'-deoxyadenosine + 2 L-methionine + 2 oxidized [2Fe-2S]-[ferredoxin]. It participates in cofactor biosynthesis; biotin biosynthesis; biotin from 7,8-diaminononanoate: step 2/2. Its function is as follows. Catalyzes the conversion of dethiobiotin (DTB) to biotin by the insertion of a sulfur atom into dethiobiotin via a radical-based mechanism. This Ehrlichia canis (strain Jake) protein is Biotin synthase.